The primary structure comprises 103 residues: Large ribosomal subunit protein bL21 (103 aa).

The protein belongs to the bacterial ribosomal protein bL21 family. As to quaternary structure, part of the 50S ribosomal subunit. Contacts protein L20.

Functionally, this protein binds to 23S rRNA in the presence of protein L20. This chain is Large ribosomal subunit protein bL21, found in Photobacterium profundum (strain SS9).